We begin with the raw amino-acid sequence, 121 residues long: Large ribosomal subunit protein uL14 (121 aa).

The protein belongs to the universal ribosomal protein uL14 family. Part of the 50S ribosomal subunit. Forms a cluster with proteins L3 and L19. In the 70S ribosome, L14 and L19 interact and together make contacts with the 16S rRNA in bridges B5 and B8.

Binds to 23S rRNA. Forms part of two intersubunit bridges in the 70S ribosome. The sequence is that of Large ribosomal subunit protein uL14 from Porphyromonas gingivalis (strain ATCC 33277 / DSM 20709 / CIP 103683 / JCM 12257 / NCTC 11834 / 2561).